The primary structure comprises 238 residues: UPF0280 protein Msm_0088 (238 aa).

Belongs to the UPF0280 family.

This is UPF0280 protein Msm_0088 from Methanobrevibacter smithii (strain ATCC 35061 / DSM 861 / OCM 144 / PS).